The sequence spans 210 residues: Large ribosomal subunit protein bL25 (210 aa).

The segment at 179–210 is disordered; sequence LPPQQEEEIHSGEQQEPGHPDAEEGRETTPES. Residues 185-210 are compositionally biased toward basic and acidic residues; it reads EEIHSGEQQEPGHPDAEEGRETTPES.

It belongs to the bacterial ribosomal protein bL25 family. CTC subfamily. As to quaternary structure, part of the 50S ribosomal subunit; part of the 5S rRNA/L5/L18/L25 subcomplex. Contacts the 5S rRNA. Binds to the 5S rRNA independently of L5 and L18.

This is one of the proteins that binds to the 5S RNA in the ribosome where it forms part of the central protuberance. This Geobacillus sp. (strain WCH70) protein is Large ribosomal subunit protein bL25.